The following is a 429-amino-acid chain: Threonine synthase (429 aa).

Lys-108 carries the N6-(pyridoxal phosphate)lysine modification.

The protein belongs to the threonine synthase family. Pyridoxal 5'-phosphate is required as a cofactor.

The enzyme catalyses O-phospho-L-homoserine + H2O = L-threonine + phosphate. Its pathway is amino-acid biosynthesis; L-threonine biosynthesis; L-threonine from L-aspartate: step 5/5. Its function is as follows. Catalyzes the gamma-elimination of phosphate from L-phosphohomoserine and the beta-addition of water to produce L-threonine. This chain is Threonine synthase (thrC), found in Buchnera aphidicola subsp. Acyrthosiphon pisum (strain APS) (Acyrthosiphon pisum symbiotic bacterium).